Reading from the N-terminus, the 149-residue chain is 3-dehydroquinate dehydratase (149 aa).

Tyrosine 22 functions as the Proton acceptor in the catalytic mechanism. 3 residues coordinate substrate: asparagine 74, histidine 80, and aspartate 87. Histidine 100 (proton donor) is an active-site residue. Substrate-binding positions include 101–102 (LS) and arginine 111.

This sequence belongs to the type-II 3-dehydroquinase family. As to quaternary structure, homododecamer.

It catalyses the reaction 3-dehydroquinate = 3-dehydroshikimate + H2O. The protein operates within metabolic intermediate biosynthesis; chorismate biosynthesis; chorismate from D-erythrose 4-phosphate and phosphoenolpyruvate: step 3/7. In terms of biological role, catalyzes a trans-dehydration via an enolate intermediate. In Vesicomyosocius okutanii subsp. Calyptogena okutanii (strain HA), this protein is 3-dehydroquinate dehydratase.